Reading from the N-terminus, the 561-residue chain is Lipase maturation factor 1 (561 aa).

The segment at 1–32 is disordered; that stretch reads MAAPRESLRRRKAGAGDPEPEAPPGQGRDLKG. Residues 1–42 lie on the Cytoplasmic side of the membrane; the sequence is MAAPRESLRRRKAGAGDPEPEAPPGQGRDLKGRPARLRAGTF. A helical membrane pass occupies residues 43 to 65; that stretch reads WLTRIVLLRALAFVYFVAFLVAF. Topologically, residues 66–120 are lumenal; the sequence is HQNKQLIGDRGLLPCRAYLQSVQRHFGGRVSWDALSYAPTILWLLDWSHMDANLD. The chain crosses the membrane as a helical span at residues 121–144; the sequence is ALALLGLGISSFILVSGCANMVLM. Residues 145–200 lie on the Cytoplasmic side of the membrane; the sequence is AALWVLYMSLVNVGQIWYSFGWESQLLETGFLGIFLCPLWTLSALPRGTPTSWVVM. Residues 201-214 form a helical membrane-spanning segment; that stretch reads WGFRWLIFRIMLGA. Residues 215–285 are Lumenal-facing; sequence GLIKIRGDRC…LGRRMCIVHG (71 aa). Residues 286–314 form a helical membrane-spanning segment; it reads ALQVLFQVVLIISGNLSFLNWLTIVPSLA. At 315–360 the chain is on the cytoplasmic side; that stretch reads CFDDATLGGLFPSGPGRLKDQVLKIQEEETRGARAPRTRGSVARGT. The chain crosses the membrane as a helical span at residues 361–382; the sequence is VNLALGILVAWLSIPVVLNLLS. Residues 383–561 lie on the Lumenal side of the membrane; sequence PRQVMNSSFN…SRQWPYPEPE (179 aa).

It belongs to the lipase maturation factor family. Interacts with LPL and SEL1L.

The protein resides in the endoplasmic reticulum membrane. Its function is as follows. Involved in the maturation of specific proteins in the endoplasmic reticulum. Required for maturation and transport of active lipoprotein lipase (LPL) through the secretory pathway. Each LMF1 molecule chaperones 50 or more molecules of LPL. The protein is Lipase maturation factor 1 (LMF1) of Bos taurus (Bovine).